We begin with the raw amino-acid sequence, 187 residues long: Frataxin, mitochondrial (187 aa).

It belongs to the frataxin family. As to quaternary structure, monomer. Oligomer. Interacts with NIFS1.

The protein localises to the mitochondrion. It carries out the reaction 4 Fe(2+) + O2 + 4 H(+) = 4 Fe(3+) + 2 H2O. Functionally, promotes the biosynthesis of heme as well as the assembly and repair of iron-sulfur clusters by delivering Fe(2+) to proteins involved in these pathways. May play a role in the protection against iron-catalyzed oxidative stress through its ability to catalyze the oxidation of Fe(2+) to Fe(3+). May be able to store large amounts of the metal in the form of a ferrihydrite mineral by oligomerization. Binds to the mitochondrial cysteine desulfurase NIFS1 and increases its activity. This chain is Frataxin, mitochondrial (FH), found in Arabidopsis thaliana (Mouse-ear cress).